The following is a 74-amino-acid chain: High-potential iron-sulfur protein (74 aa).

Residues Cys-36, Cys-39, Cys-53, and Cys-67 each coordinate [4Fe-4S] cluster.

It belongs to the high-potential iron-sulfur protein (HiPIP) family. Homodimer.

Specific class of high-redox-potential 4Fe-4S ferredoxins. Functions in anaerobic electron transport in most purple and in some other photosynthetic bacteria and in at least one genus (Paracoccus) of halophilic, denitrifying bacteria. The protein is High-potential iron-sulfur protein (hip) of Rubrivivax gelatinosus (Rhodocyclus gelatinosus).